The following is an 804-amino-acid chain: Phenylalanine--tRNA ligase beta subunit (804 aa).

The tRNA-binding domain maps to 39-147; it reads GEGLDSVVTA…PDCEPGQPVF (109 aa). The 80-residue stretch at 401–480 folds into the B5 domain; it reads LAERKVTLAV…RLNGYDNIPV (80 aa). Residues Asp458, Asp464, Glu467, and Glu468 each coordinate Mg(2+). In terms of domain architecture, FDX-ACB spans 711 to 804; that stretch reads SRFPQVARDS…LIAKLGAEIR (94 aa).

This sequence belongs to the phenylalanyl-tRNA synthetase beta subunit family. Type 1 subfamily. Tetramer of two alpha and two beta subunits. Mg(2+) serves as cofactor.

Its subcellular location is the cytoplasm. It catalyses the reaction tRNA(Phe) + L-phenylalanine + ATP = L-phenylalanyl-tRNA(Phe) + AMP + diphosphate + H(+). The sequence is that of Phenylalanine--tRNA ligase beta subunit from Syntrophotalea carbinolica (strain DSM 2380 / NBRC 103641 / GraBd1) (Pelobacter carbinolicus).